Reading from the N-terminus, the 304-residue chain is 17-beta-hydroxysteroid dehydrogenase 13 (304 aa).

The first 19 residues, M1 to L19, serve as a signal peptide directing secretion. Position 33 is a phosphoserine (S33). L40–D67 provides a ligand contact to NAD(+). K79 carries the N6-acetyllysine modification. Substrate is bound at residue S172. The active-site Proton acceptor is the Y185. An NAD(+)-binding site is contributed by K189. The tract at residues S276–H304 is disordered.

The protein belongs to the short-chain dehydrogenases/reductases (SDR) family. As to expression, expressed predominantly in the liver (at protein level).

The protein localises to the lipid droplet. Its subcellular location is the endoplasmic reticulum. The enzyme catalyses 17beta-estradiol + NAD(+) = estrone + NADH + H(+). It carries out the reaction all-trans-retinol + NAD(+) = all-trans-retinal + NADH + H(+). The catalysed reaction is all-trans-retinal + NAD(+) + H2O = all-trans-retinoate + NADH + 2 H(+). Its function is as follows. Plays a pivotal role in hepatic lipid metabolism. In vitro, it catalyzes the oxidation of a variety of lipid substrates, including 17beta-estradiol, retinol, retinal, and leukotriene B4. In Mus musculus (Mouse), this protein is 17-beta-hydroxysteroid dehydrogenase 13 (Hsd17b13).